Consider the following 3589-residue polypeptide: D-lysergyl-peptide-synthetase subunit 1 (3589 aa).

The segment at 344-742 is adenylation (A) domain 1; the sequence is NCHSRPDSLA…IGRKDLQVKV (399 aa). The Carrier 1 domain maps to 883–952; it reads VERRLQLLFA…KLRDLAAASS (70 aa). S915 carries the post-translational modification O-(pantetheine 4'-phosphoryl)serine. The condensation (C) domain 1 stretch occupies residues 995 to 1380; it reads EDIYPCTSLQ…SQFQHILTQI (386 aa). Positions 1424–1826 are adenylation (A) domain 2; sequence QAKAQMQPEA…RRKDSQVKLR (403 aa). The region spanning 1974–2042 is the Carrier 2 domain; sequence LERELQKIWA…TIEKLAAAAV (69 aa). The residue at position 2006 (S2006) is an O-(pantetheine 4'-phosphoryl)serine. Residues 2087-2509 form a condensation (C) domain 2 region; sequence VEDIYPCSPI…IEMLDEEHRS (423 aa). The adenylation (A) domain 3 stretch occupies residues 2534 to 2929; the sequence is CLESPESPAI…GRKDDQVKIR (396 aa). Residues 3064 to 3132 form the Carrier 3 domain; it reads LETRLQELVG…RLSELAVVLN (69 aa). S3096 carries the post-translational modification O-(pantetheine 4'-phosphoryl)serine. Residues 3187 to 3585 form a cyclization (Cyc) domain region; sequence TNFIALHFSQ…TYPESLVSEL (399 aa).

It belongs to the NRP synthetase family.

It functions in the pathway alkaloid biosynthesis; ergot alkaloid biosynthesis. Functionally, D-lysergyl-peptide-synthetase subunit 1; part of the gene cluster that mediates the biosynthesis of fungal ergot alkaloid ergovaline, the predominant ergopeptine product in E.festucae var. lolii. DmaW catalyzes the first step of ergot alkaloid biosynthesis by condensing dimethylallyl diphosphate (DMAP) and tryptophan to form 4-dimethylallyl-L-tryptophan. The second step is catalyzed by the methyltransferase easF that methylates 4-dimethylallyl-L-tryptophan in the presence of S-adenosyl-L-methionine, resulting in the formation of 4-dimethylallyl-L-abrine. The catalase easC and the FAD-dependent oxidoreductase easE then transform 4-dimethylallyl-L-abrine to chanoclavine-I which is further oxidized by easD in the presence of NAD(+), resulting in the formation of chanoclavine-I aldehyde. Agroclavine dehydrogenase easG then mediates the conversion of chanoclavine-I aldehyde to agroclavine via a non-enzymatic adduct reaction: the substrate is an iminium intermediate that is formed spontaneously from chanoclavine-I aldehyde in the presence of glutathione. The presence of easA is not required to complete this reaction. Further conversion of agroclavine to paspalic acid is a two-step process involving oxidation of agroclavine to elymoclavine and of elymoclavine to paspalic acid, the second step being performed by the elymoclavine oxidase cloA. Paspalic acid is then further converted to D-lysergic acid. Ergovaline is assembled from D-lysergic acid and three different amino acids by the D-lysergyl-peptide-synthetase composed of a monomudular (lpsB) and a trimodular (lpsA) nonribosomal peptide synthetase subunit. The sequence is that of D-lysergyl-peptide-synthetase subunit 1 from Epichloe festucae var. lolii (Neotyphodium lolii).